The following is a 635-amino-acid chain: Threonine--tRNA ligase (635 aa).

The TGS domain occupies 1–61 (MINISFPDGS…DNDCKLRILT (61 aa)). Residues 242 to 533 (DHRKLGRELD…LIEEYAGRFP (292 aa)) are catalytic. Zn(2+) is bound by residues Cys-333, His-384, and His-510.

The protein belongs to the class-II aminoacyl-tRNA synthetase family. In terms of assembly, homodimer. Requires Zn(2+) as cofactor.

The protein resides in the cytoplasm. It carries out the reaction tRNA(Thr) + L-threonine + ATP = L-threonyl-tRNA(Thr) + AMP + diphosphate + H(+). Its function is as follows. Catalyzes the attachment of threonine to tRNA(Thr) in a two-step reaction: L-threonine is first activated by ATP to form Thr-AMP and then transferred to the acceptor end of tRNA(Thr). Also edits incorrectly charged L-seryl-tRNA(Thr). This chain is Threonine--tRNA ligase, found in Rickettsia peacockii (strain Rustic).